A 159-amino-acid chain; its full sequence is Cathelicidin-5 (159 aa).

An N-terminal signal peptide occupies residues 1-29 (METQRASLSLGRWSLWLLLLGLALPSASA). The residue at position 30 (Gln30) is a Pyrrolidone carboxylic acid. Positions 30 to 131 (QALSYREAVL…DITCAVPQSV (102 aa)) are excised as a propeptide. Intrachain disulfides connect Cys86/Cys97 and Cys108/Cys125.

It belongs to the cathelicidin family.

The protein resides in the secreted. Its function is as follows. Exerts a potent antimicrobial activity against Gram-negative and Gram-positive bacteria, including methicillin-resistant Staphylococcus aureus, and fungi. The sequence is that of Cathelicidin-5 (CATHL5) from Bos taurus (Bovine).